The chain runs to 187 residues: Adenine phosphoribosyltransferase (187 aa).

This sequence belongs to the purine/pyrimidine phosphoribosyltransferase family. As to quaternary structure, homodimer.

It is found in the cytoplasm. The enzyme catalyses AMP + diphosphate = 5-phospho-alpha-D-ribose 1-diphosphate + adenine. Its pathway is purine metabolism; AMP biosynthesis via salvage pathway; AMP from adenine: step 1/1. Functionally, catalyzes a salvage reaction resulting in the formation of AMP, that is energically less costly than de novo synthesis. The protein is Adenine phosphoribosyltransferase of Yersinia pseudotuberculosis serotype O:3 (strain YPIII).